The chain runs to 219 residues: Probable transaldolase (219 aa).

The active-site Schiff-base intermediate with substrate is the K83.

It belongs to the transaldolase family. Type 3B subfamily.

The protein resides in the cytoplasm. The enzyme catalyses D-sedoheptulose 7-phosphate + D-glyceraldehyde 3-phosphate = D-erythrose 4-phosphate + beta-D-fructose 6-phosphate. It functions in the pathway carbohydrate degradation; pentose phosphate pathway; D-glyceraldehyde 3-phosphate and beta-D-fructose 6-phosphate from D-ribose 5-phosphate and D-xylulose 5-phosphate (non-oxidative stage): step 2/3. Its function is as follows. Transaldolase is important for the balance of metabolites in the pentose-phosphate pathway. This is Probable transaldolase from Cereibacter sphaeroides (strain ATCC 17029 / ATH 2.4.9) (Rhodobacter sphaeroides).